A 130-amino-acid polypeptide reads, in one-letter code: Small ribosomal subunit protein uS8 (130 aa).

Belongs to the universal ribosomal protein uS8 family. As to quaternary structure, part of the 30S ribosomal subunit. Contacts proteins S5 and S12.

Its function is as follows. One of the primary rRNA binding proteins, it binds directly to 16S rRNA central domain where it helps coordinate assembly of the platform of the 30S subunit. This is Small ribosomal subunit protein uS8 from Sodalis glossinidius (strain morsitans).